The chain runs to 207 residues: MNSIIKEHYFEHKSTIELARDILGMRLVHQTQHVKLSGYIVETEAYLGATDIAAHSYRNLKTKRTDIMYQPAGAIYMYQMHRQVLLNFITMKEGVPEAVLIRAIEPDEASIPYMEIKRNGKTGSELTNGPGKLTQALGLTIKDYGKTLFNSNIWLEEAKIPHIIEATNRIGVPNKGIATHYPLRFTVKGSRYISGQRKGQILTEIWQ.

It belongs to the DNA glycosylase MPG family.

This is Putative 3-methyladenine DNA glycosylase from Listeria welshimeri serovar 6b (strain ATCC 35897 / DSM 20650 / CCUG 15529 / CIP 8149 / NCTC 11857 / SLCC 5334 / V8).